The sequence spans 259 residues: Thiazole synthase (259 aa).

The active-site Schiff-base intermediate with DXP is the Lys99. 1-deoxy-D-xylulose 5-phosphate-binding positions include Gly161, 187–188, and 209–210; these read AG and NT.

It belongs to the ThiG family. Homotetramer. Forms heterodimers with either ThiH or ThiS.

It localises to the cytoplasm. The enzyme catalyses [ThiS sulfur-carrier protein]-C-terminal-Gly-aminoethanethioate + 2-iminoacetate + 1-deoxy-D-xylulose 5-phosphate = [ThiS sulfur-carrier protein]-C-terminal Gly-Gly + 2-[(2R,5Z)-2-carboxy-4-methylthiazol-5(2H)-ylidene]ethyl phosphate + 2 H2O + H(+). It participates in cofactor biosynthesis; thiamine diphosphate biosynthesis. Functionally, catalyzes the rearrangement of 1-deoxy-D-xylulose 5-phosphate (DXP) to produce the thiazole phosphate moiety of thiamine. Sulfur is provided by the thiocarboxylate moiety of the carrier protein ThiS. In vitro, sulfur can be provided by H(2)S. This chain is Thiazole synthase, found in Sulfurimonas denitrificans (strain ATCC 33889 / DSM 1251) (Thiomicrospira denitrificans (strain ATCC 33889 / DSM 1251)).